A 76-amino-acid polypeptide reads, in one-letter code: DNA-directed RNA polymerase subunit epsilon (76 aa).

The protein belongs to the RNA polymerase subunit epsilon family. RNAP is composed of a core of 2 alpha, a beta and a beta' subunit. The core is associated with a delta subunit, and at least one of epsilon or omega. When a sigma factor is associated with the core the holoenzyme is formed, which can initiate transcription.

The catalysed reaction is RNA(n) + a ribonucleoside 5'-triphosphate = RNA(n+1) + diphosphate. Its function is as follows. A non-essential component of RNA polymerase (RNAP). The chain is DNA-directed RNA polymerase subunit epsilon from Streptococcus sanguinis (strain SK36).